Reading from the N-terminus, the 360-residue chain is Dihydroorotate dehydrogenase (quinone) (360 aa).

Residues alanine 66–lysine 70 and threonine 90 contribute to the FMN site. Substrate is bound at residue lysine 70. Asparagine 115–phenylalanine 119 lines the substrate pocket. FMN-binding residues include asparagine 143 and asparagine 176. Position 176 (asparagine 176) interacts with substrate. Catalysis depends on serine 179, which acts as the Nucleophile. Asparagine 181 is a substrate binding site. Residues lysine 212 and threonine 240 each contribute to the FMN site. Asparagine 241–threonine 242 contacts substrate. FMN contacts are provided by residues glycine 264, glycine 293, and tyrosine 314 to threonine 315.

It belongs to the dihydroorotate dehydrogenase family. Type 2 subfamily. Monomer. FMN serves as cofactor.

It is found in the cell membrane. The catalysed reaction is (S)-dihydroorotate + a quinone = orotate + a quinol. It functions in the pathway pyrimidine metabolism; UMP biosynthesis via de novo pathway; orotate from (S)-dihydroorotate (quinone route): step 1/1. Catalyzes the conversion of dihydroorotate to orotate with quinone as electron acceptor. The sequence is that of Dihydroorotate dehydrogenase (quinone) from Mycobacterium marinum (strain ATCC BAA-535 / M).